The primary structure comprises 145 residues: MLEPKDTKHRKVQRNQGLKRNKYAVKGTRLSFGDYGLKSLEEGEVNSRQLEAARVAINRYLKRDGKVWIRVFPDKPKTKTPAETRMGKGKGEPEHFVAPVQPGNVIFEVGGGADEESAREALRLGKHKLPLKTKFVVRPGSRAEE.

Positions 76-95 are enriched in basic and acidic residues; it reads PKTKTPAETRMGKGKGEPEH. The disordered stretch occupies residues 76–97; the sequence is PKTKTPAETRMGKGKGEPEHFV.

Belongs to the universal ribosomal protein uL16 family. In terms of assembly, part of the 50S ribosomal subunit.

Binds 23S rRNA and is also seen to make contacts with the A and possibly P site tRNAs. This chain is Large ribosomal subunit protein uL16, found in Salinibacter ruber (strain DSM 13855 / M31).